The primary structure comprises 245 residues: tRNA1(Val) (adenine(37)-N6)-methyltransferase (245 aa).

It belongs to the methyltransferase superfamily. tRNA (adenine-N(6)-)-methyltransferase family.

The protein localises to the cytoplasm. It catalyses the reaction adenosine(37) in tRNA1(Val) + S-adenosyl-L-methionine = N(6)-methyladenosine(37) in tRNA1(Val) + S-adenosyl-L-homocysteine + H(+). In terms of biological role, specifically methylates the adenine in position 37 of tRNA(1)(Val) (anticodon cmo5UAC). The protein is tRNA1(Val) (adenine(37)-N6)-methyltransferase of Salmonella arizonae (strain ATCC BAA-731 / CDC346-86 / RSK2980).